The primary structure comprises 40 residues: Photosystem II reaction center protein J (40 aa).

The helical transmembrane segment at Ile8 to Phe28 threads the bilayer.

The protein belongs to the PsbJ family. In terms of assembly, PSII is composed of 1 copy each of membrane proteins PsbA, PsbB, PsbC, PsbD, PsbE, PsbF, PsbH, PsbI, PsbJ, PsbK, PsbL, PsbM, PsbT, PsbX, PsbY, PsbZ, Psb30/Ycf12, at least 3 peripheral proteins of the oxygen-evolving complex and a large number of cofactors. It forms dimeric complexes.

It is found in the plastid. It localises to the chloroplast thylakoid membrane. One of the components of the core complex of photosystem II (PSII). PSII is a light-driven water:plastoquinone oxidoreductase that uses light energy to abstract electrons from H(2)O, generating O(2) and a proton gradient subsequently used for ATP formation. It consists of a core antenna complex that captures photons, and an electron transfer chain that converts photonic excitation into a charge separation. This Vitis vinifera (Grape) protein is Photosystem II reaction center protein J.